Reading from the N-terminus, the 198-residue chain is DnaJ homolog subfamily C member 5 (198 aa).

4 positions are modified to phosphoserine: Ser8, Ser10, Ser12, and Ser15. The 70-residue stretch at 13 to 82 folds into the J domain; it reads GESLYHVLGL…RNIYDKYGSL (70 aa). Tyr17 carries the post-translational modification Phosphotyrosine. Lys56 is subject to N6-acetyllysine. Ser151 carries the post-translational modification Phosphoserine.

As to quaternary structure, homodimer. Interacts with the chaperone complex consisting of HSC70 and SGTA. Interacts with ZDHHC13 (via ANK repeats). Interacts with ZDHHC17 (via ANK repeats). Interacts with SYT1, SYT5 and SYT7, and with SYT9, forming a complex with SNAP25. The interaction with SYT9 is stimulated tenfold in presence of calcium. In terms of processing, formation of the chaperone complex DNAJC5/HSC70 is not regulated by phosphorylation. Ser-10 phosphorylation induces an order-to-disorder transition triggering the interaction with Lys-58. This conformational switch modulates DNAJC5's cellular functions by reducing binding to syntaxin and synaptogamin without altering HSC70 interactions. Palmitoylated. Could be palmitoylated by DHHC3, DHHC7, DHHC15 and DHHC17. Palmitoylation occurs probably in the cysteine-rich domain and regulates DNAJC5 membrane attachment.

The protein resides in the cytoplasm. It localises to the cytosol. Its subcellular location is the membrane. It is found in the cytoplasmic vesicle. The protein localises to the secretory vesicle. The protein resides in the chromaffin granule membrane. It localises to the melanosome. Its subcellular location is the cell membrane. Functionally, acts as a co-chaperone for the SNARE protein SNAP-25. Involved in the calcium-mediated control of a late stage of exocytosis. Acts as a general chaperone in regulated exocytosis. May have an important role in presynaptic function. May be involved in calcium-dependent neurotransmitter release at nerve endings. The sequence is that of DnaJ homolog subfamily C member 5 from Mus musculus (Mouse).